Consider the following 494-residue polypeptide: Cytochrome P450 2A10 (494 aa).

Lys379 bears the N6-acetyllysine mark. A heme-binding site is contributed by Cys439.

It belongs to the cytochrome P450 family. Heme serves as cofactor. As to expression, expressed in liver and lung as well as in nasal tissues.

It is found in the endoplasmic reticulum membrane. The protein localises to the microsome membrane. It carries out the reaction an organic molecule + reduced [NADPH--hemoprotein reductase] + O2 = an alcohol + oxidized [NADPH--hemoprotein reductase] + H2O + H(+). Its function is as follows. Catalyzes the oxygenation of a variety of substrates, including ethanol and procarcinogens such as N-nitrosodiethylamine and phenacetin. Exhibits a high coumarin 7-hydroxylase activity. Converts also testosterone to androstenedione. The protein is Cytochrome P450 2A10 (CYP2A10) of Oryctolagus cuniculus (Rabbit).